Reading from the N-terminus, the 510-residue chain is Bifunctional purine biosynthesis protein PurH (510 aa).

In terms of domain architecture, MGS-like spans 1 to 142 (MRALLSVSDK…KNYKDVMVLC (142 aa)).

Belongs to the PurH family.

It carries out the reaction (6R)-10-formyltetrahydrofolate + 5-amino-1-(5-phospho-beta-D-ribosyl)imidazole-4-carboxamide = 5-formamido-1-(5-phospho-D-ribosyl)imidazole-4-carboxamide + (6S)-5,6,7,8-tetrahydrofolate. The enzyme catalyses IMP + H2O = 5-formamido-1-(5-phospho-D-ribosyl)imidazole-4-carboxamide. The protein operates within purine metabolism; IMP biosynthesis via de novo pathway; 5-formamido-1-(5-phospho-D-ribosyl)imidazole-4-carboxamide from 5-amino-1-(5-phospho-D-ribosyl)imidazole-4-carboxamide (10-formyl THF route): step 1/1. It participates in purine metabolism; IMP biosynthesis via de novo pathway; IMP from 5-formamido-1-(5-phospho-D-ribosyl)imidazole-4-carboxamide: step 1/1. The sequence is that of Bifunctional purine biosynthesis protein PurH from Campylobacter jejuni (strain RM1221).